Consider the following 347-residue polypeptide: UPF0283 membrane protein ECA1987 (347 aa).

Positions 1–11 (MNEPLKPRVTF) are enriched in basic and acidic residues. The segment at 1–48 (MNEPLKPRVTFDDVSPQEPQPQLRAGLAFDEQSSTPFSPISREEEVPE) is disordered. Transmembrane regions (helical) follow at residues 70-90 (MVMA…VQSL), 99-119 (WIAL…VGSL), and 213-233 (ESTL…FIAW).

The protein belongs to the UPF0283 family.

It localises to the cell inner membrane. In Pectobacterium atrosepticum (strain SCRI 1043 / ATCC BAA-672) (Erwinia carotovora subsp. atroseptica), this protein is UPF0283 membrane protein ECA1987.